Reading from the N-terminus, the 397-residue chain is MQKQNIVILGSTGSIGKSTLSVIENNPQKYHAFALVGGKNVETMFEQCIKFRPHFAALDDVNAAKILREKLIAHHIPTEVLAGQRAICELAAHPDADQIMASIVGAAGLLPTLSAVKAGKRVLLANKESLVTCGQLFIDAVKNYGAKLLPVDSEHNAIFQSLPPEAQEKIGFCPLSELGVSKIILTGSGGPFRYTPLEQFASITPEQAVAHPNWSMGKKISVDSATMMNKGLEYIEARWLFNASAEEMEVIIHPQSIIHSMVRYVDGSVIAQMGNPDMRTPIAETMAYPHRTFAGVEPLDFFKIKELTFIEPDFNRYPNLKLAIDAFAAGQYATTAMNAANEIAVQAFLDRQISFMDIAKINLKTIEKISPYTIQNIDDVLEIDAQAREIAKTLIRE.

NADPH is bound by residues T12, G13, S14, I15, G38, K39, N40, and N126. K127 serves as a coordination point for 1-deoxy-D-xylulose 5-phosphate. Position 128 (E128) interacts with NADPH. D152 contributes to the Mn(2+) binding site. The 1-deoxy-D-xylulose 5-phosphate site is built by S153, E154, S188, and H211. E154 contacts Mn(2+). NADPH is bound at residue G217. 4 residues coordinate 1-deoxy-D-xylulose 5-phosphate: S224, N229, K230, and E233. E233 provides a ligand contact to Mn(2+).

Belongs to the DXR family. Mg(2+) serves as cofactor. Requires Mn(2+) as cofactor.

The catalysed reaction is 2-C-methyl-D-erythritol 4-phosphate + NADP(+) = 1-deoxy-D-xylulose 5-phosphate + NADPH + H(+). It participates in isoprenoid biosynthesis; isopentenyl diphosphate biosynthesis via DXP pathway; isopentenyl diphosphate from 1-deoxy-D-xylulose 5-phosphate: step 1/6. Catalyzes the NADPH-dependent rearrangement and reduction of 1-deoxy-D-xylulose-5-phosphate (DXP) to 2-C-methyl-D-erythritol 4-phosphate (MEP). The protein is 1-deoxy-D-xylulose 5-phosphate reductoisomerase of Haemophilus influenzae (strain PittGG).